Reading from the N-terminus, the 245-residue chain is 2,3-bisphosphoglycerate-dependent phosphoglycerate mutase (245 aa).

Substrate-binding positions include 8 to 15, 21 to 22, R60, 87 to 90, K98, 114 to 115, and 183 to 184; these read RHGQSLWN, TG, ERHY, RR, and GN. H9 acts as the Tele-phosphohistidine intermediate in catalysis. The active-site Proton donor/acceptor is the E87.

This sequence belongs to the phosphoglycerate mutase family. BPG-dependent PGAM subfamily.

The catalysed reaction is (2R)-2-phosphoglycerate = (2R)-3-phosphoglycerate. The protein operates within carbohydrate degradation; glycolysis; pyruvate from D-glyceraldehyde 3-phosphate: step 3/5. In terms of biological role, catalyzes the interconversion of 2-phosphoglycerate and 3-phosphoglycerate. This Bacillus thuringiensis (strain Al Hakam) protein is 2,3-bisphosphoglycerate-dependent phosphoglycerate mutase.